A 362-amino-acid polypeptide reads, in one-letter code: 3-dehydroquinate synthase (362 aa).

NAD(+) is bound by residues 72–77 (DGEQYK), 106–110 (GVVGD), 130–131 (TT), Lys-143, Lys-152, and 170–173 (CLKT). The Zn(2+) site is built by Glu-185, His-248, and His-265.

Belongs to the sugar phosphate cyclases superfamily. Dehydroquinate synthase family. Co(2+) is required as a cofactor. Zn(2+) serves as cofactor. It depends on NAD(+) as a cofactor.

It localises to the cytoplasm. It carries out the reaction 7-phospho-2-dehydro-3-deoxy-D-arabino-heptonate = 3-dehydroquinate + phosphate. Its pathway is metabolic intermediate biosynthesis; chorismate biosynthesis; chorismate from D-erythrose 4-phosphate and phosphoenolpyruvate: step 2/7. In terms of biological role, catalyzes the conversion of 3-deoxy-D-arabino-heptulosonate 7-phosphate (DAHP) to dehydroquinate (DHQ). This is 3-dehydroquinate synthase from Aliivibrio fischeri (strain ATCC 700601 / ES114) (Vibrio fischeri).